Here is a 242-residue protein sequence, read N- to C-terminus: Phosphomannomutase 2 (242 aa).

The active-site Nucleophile is the aspartate 8. Residues aspartate 8 and aspartate 10 each coordinate Mg(2+). The active-site Proton donor/acceptor is aspartate 10. Alpha-D-mannose 1-phosphate is bound by residues arginine 17, arginine 119, arginine 130, and arginine 137. Residue lysine 145 is modified to N6-acetyllysine. Positions 175 and 177 each coordinate alpha-D-mannose 1-phosphate. The Mg(2+) site is built by aspartate 205, phenylalanine 217, aspartate 219, and threonine 222.

Belongs to the eukaryotic PMM family. In terms of assembly, homodimer.

The protein resides in the cytoplasm. The catalysed reaction is alpha-D-mannose 1-phosphate = D-mannose 6-phosphate. Its pathway is nucleotide-sugar biosynthesis; GDP-alpha-D-mannose biosynthesis; alpha-D-mannose 1-phosphate from D-fructose 6-phosphate: step 2/2. Involved in the synthesis of the GDP-mannose and dolichol-phosphate-mannose required for a number of critical mannosyl transfer reactions. This Mus musculus (Mouse) protein is Phosphomannomutase 2 (Pmm2).